The following is a 429-amino-acid chain: Adenylosuccinate synthetase (429 aa).

Residues 12–18 (GDEGKGK) and 40–42 (GHT) each bind GTP. Asp-13 serves as the catalytic Proton acceptor. 2 residues coordinate Mg(2+): Asp-13 and Gly-40. Residues 13–16 (DEGK), 38–41 (NAGH), Thr-128, Arg-142, Gln-223, Thr-238, and Arg-302 each bind IMP. The active-site Proton donor is the His-41. 298-304 (ATTGRKR) is a substrate binding site. GTP contacts are provided by residues Arg-304, 330–332 (KLD), and 412–414 (GTG).

Belongs to the adenylosuccinate synthetase family. As to quaternary structure, homodimer. Mg(2+) serves as cofactor.

The protein resides in the cytoplasm. The enzyme catalyses IMP + L-aspartate + GTP = N(6)-(1,2-dicarboxyethyl)-AMP + GDP + phosphate + 2 H(+). It functions in the pathway purine metabolism; AMP biosynthesis via de novo pathway; AMP from IMP: step 1/2. In terms of biological role, plays an important role in the de novo pathway of purine nucleotide biosynthesis. Catalyzes the first committed step in the biosynthesis of AMP from IMP. This chain is Adenylosuccinate synthetase, found in Tropheryma whipplei (strain TW08/27) (Whipple's bacillus).